The chain runs to 328 residues: DNA-directed RNA polymerase subunit alpha (328 aa).

The segment at 1 to 234 (MVREKVKVST…DLFIPFLQAE (234 aa)) is alpha N-terminal domain (alpha-NTD). The tract at residues 268 to 328 (IALKSIFIDQ…KQIMSILEKK (61 aa)) is alpha C-terminal domain (alpha-CTD).

It belongs to the RNA polymerase alpha chain family. As to quaternary structure, in plastids the minimal PEP RNA polymerase catalytic core is composed of four subunits: alpha, beta, beta', and beta''. When a (nuclear-encoded) sigma factor is associated with the core the holoenzyme is formed, which can initiate transcription.

Its subcellular location is the plastid. It localises to the chloroplast. The enzyme catalyses RNA(n) + a ribonucleoside 5'-triphosphate = RNA(n+1) + diphosphate. Its function is as follows. DNA-dependent RNA polymerase catalyzes the transcription of DNA into RNA using the four ribonucleoside triphosphates as substrates. This Citrus sinensis (Sweet orange) protein is DNA-directed RNA polymerase subunit alpha.